Reading from the N-terminus, the 759-residue chain is Glycerol-3-phosphate O-acyltransferase 1 (759 aa).

The Lumenal segment spans residues 1 to 48; that stretch reads MPAPKLTEKFASSKSTQKTTNYSSIEAKSVKTSADQAYIYQEPSATKK. Residues 49–69 form a helical membrane-spanning segment; the sequence is ILYSIATWLLYNIFHCFFREI. At 70–434 the chain is on the cytoplasmic side; the sequence is RGRGSFKVPQ…AKVNFAKNLG (365 aa). Positions 414 to 419 match the HXXXXD motif motif; the sequence is HYNLPD. A helical membrane pass occupies residues 435–449; sequence LVFFRSIGLCILFSL. Position 450 (A450) is a topological domain, lumenal. The helical transmembrane segment at 451 to 465 threads the bilayer; that stretch reads MPGIIMFSPVFILAK. Residues 466 to 493 lie on the Cytoplasmic side of the membrane; the sequence is RISQEKARTALSKSTVKIKANDVIATWK. The helical transmembrane segment at 494–514 threads the bilayer; that stretch reads ILIGMGFAPLLYIFWSVLITY. At 515 to 523 the chain is on the lumenal side; that stretch reads YLRHKPWNK. A helical transmembrane segment spans residues 524–544; it reads IYVFSGSYISCVIVTYSALIV. At 545–759 the chain is on the cytoplasmic side; it reads GDIGMDGFKS…EEEEGKEGDA (215 aa). 3 disordered regions span residues 613-667, 684-705, and 729-759; these read EEDR…SLVN, RKSE…EFEV, and IGEN…EGDA. A compositionally biased stretch (basic and acidic residues) spans 647-659; that stretch reads RDNHDAYEHHNQD. Residues 688–702 are compositionally biased toward low complexity; it reads SSLASTSVAPSSSSE. Residues 736–759 show a composition bias toward acidic residues; it reads EEEEEEEEEEEEEEEEEEGKEGDA.

Belongs to the GPAT/DAPAT family.

The protein resides in the endoplasmic reticulum membrane. The enzyme catalyses sn-glycerol 3-phosphate + an acyl-CoA = a 1-acyl-sn-glycero-3-phosphate + CoA. The catalysed reaction is dihydroxyacetone phosphate + an acyl-CoA = a 1-acylglycerone 3-phosphate + CoA. It catalyses the reaction sn-glycerol 3-phosphate + hexadecanoyl-CoA = 1-hexadecanoyl-sn-glycero-3-phosphate + CoA. It carries out the reaction (9Z)-hexadecenoyl-CoA + sn-glycerol 3-phosphate = 1-(9Z-hexadecenoyl)-sn-glycero-3-phosphate + CoA. The enzyme catalyses sn-glycerol 3-phosphate + octadecanoyl-CoA = 1-octadecanoyl-sn-glycero-3-phosphate + CoA. The catalysed reaction is sn-glycerol 3-phosphate + (9Z)-octadecenoyl-CoA = 1-(9Z-octadecenoyl)-sn-glycero-3-phosphate + CoA. Its pathway is phospholipid metabolism; CDP-diacylglycerol biosynthesis; CDP-diacylglycerol from sn-glycerol 3-phosphate: step 1/3. Its function is as follows. Dual substrate-specific glycerol-3-phosphate/dihydroxyacetone phosphate sn-1 acyltransferase, catalyzing the first and committed reaction in the de novo synthesis of glycerophospholipids and triacylglycerols (TAGs). Prefers Gly-3-P over dihydroxyacetone phosphate and has a marked preference for 16-carbon fatty acyl chains. Transfers a fatty acid from fatty acyl-CoA to the sn-1 position of glycerol-3-phosphate to produce lysophosphatidic acid (LysoPA). These lipids not only are precursors of glycerolipids, but also are dynamic components of signal transduction systems that control cell physiology. SCT1 is the primary supplier of diacylglycerols (DAG), used mainly in TAG synthesis and phosphatidylcholine (PC) synthesis through the CDP-choline pathway. Regulates fatty acid desaturation, that is, the ratio of unsaturated versus saturated fatty acyl chains, by competing with the desaturase OLE1 for the common substrate C16:0-CoA. Sequesters C16:0-CoA into lipids, thereby shielding it from desaturation by OLE1. The chain is Glycerol-3-phosphate O-acyltransferase 1 from Saccharomyces cerevisiae (strain ATCC 204508 / S288c) (Baker's yeast).